A 106-amino-acid chain; its full sequence is Protamine (106 aa).

The segment at 1–106 is disordered; the sequence is ARAVRRRRAR…TRRRRRRARR (106 aa).

Sperm.

The protein localises to the nucleus. The protein resides in the chromosome. The chain is Protamine from Phorcus turbinatus (Sea snail).